The primary structure comprises 437 residues: Succinyl-CoA:cyclohexane-1-carboxylate CoA transferase (437 aa).

221 to 225 (GWGGI) contributes to the CoA binding site. E244 acts as the 5-glutamyl coenzyme A thioester intermediate in catalysis. Residues L319, G342, and K367 each contribute to the CoA site.

It belongs to the acetyl-CoA hydrolase/transferase family. As to quaternary structure, homodimer.

The enzyme catalyses cyclohexane-1-carboxylate + succinyl-CoA = cyclohexane-1-carbonyl-CoA + succinate. The catalysed reaction is cyclohexane-1-carboxylate + butanoyl-CoA = cyclohexane-1-carbonyl-CoA + butanoate. Its function is as follows. Acyl-CoA transferase involved in the anaerobic degradation of cyclohexane carboxylic acid (CHC). Catalyzes the activation of CHC to cyclohexane-1-carbonyl-CoA (CHCoA). Benzoic acid and cyclohex-1-ene-1-carboxylic acid can also be used as substrates, but with lower specific activity. Shows highest activity with succinyl-CoA and butanoyl-coA as a CoA donor, and lower activity with crotonyl-CoA, acetyl-CoA, glutaryl-CoA, CH1eneCoA, propionyl-CoA and acetoacetyl-CoA. In vitro, the enzyme can use butanoyl-coA as a CoA donor with greater efficiency than succinyl-CoA. However, succinyl-CoA is the most abundant CoA ester in exponentially grown cells, whereas butanoyl-coA is hardly detectable, indicating that succinyl-CoA is the natural CoA donor for CHC activation. The chain is Succinyl-CoA:cyclohexane-1-carboxylate CoA transferase from Geobacter metallireducens (strain ATCC 53774 / DSM 7210 / GS-15).